A 248-amino-acid polypeptide reads, in one-letter code: 2,3-bisphosphoglycerate-dependent phosphoglycerate mutase (248 aa).

Substrate contacts are provided by residues 8-15, 21-22, R60, 87-90, K98, 114-115, and 183-184; these read RHGESQWN, TG, ERHY, RR, and GN. The active-site Tele-phosphohistidine intermediate is the H9. E87 (proton donor/acceptor) is an active-site residue.

This sequence belongs to the phosphoglycerate mutase family. BPG-dependent PGAM subfamily. In terms of assembly, homodimer.

It catalyses the reaction (2R)-2-phosphoglycerate = (2R)-3-phosphoglycerate. Its pathway is carbohydrate degradation; glycolysis; pyruvate from D-glyceraldehyde 3-phosphate: step 3/5. Catalyzes the interconversion of 2-phosphoglycerate and 3-phosphoglycerate. The sequence is that of 2,3-bisphosphoglycerate-dependent phosphoglycerate mutase from Teredinibacter turnerae (strain ATCC 39867 / T7901).